The following is a 97-amino-acid chain: Co-chaperonin GroES (97 aa).

This sequence belongs to the GroES chaperonin family. Heptamer of 7 subunits arranged in a ring. Interacts with the chaperonin GroEL.

It localises to the cytoplasm. Its function is as follows. Together with the chaperonin GroEL, plays an essential role in assisting protein folding. The GroEL-GroES system forms a nano-cage that allows encapsulation of the non-native substrate proteins and provides a physical environment optimized to promote and accelerate protein folding. GroES binds to the apical surface of the GroEL ring, thereby capping the opening of the GroEL channel. The chain is Co-chaperonin GroES from Buchnera aphidicola subsp. Pemphigus spyrothecae.